Reading from the N-terminus, the 459-residue chain is uncharacterized protein (459 aa).

The TRAM domain occupies 6 to 64; sequence KNKQEKNIIITIKRLGINGEGIGYYKKKIIFIPGALPNEVVVAKIVDRHPHYLEGELVR. S-adenosyl-L-methionine is bound by residues Gln-289, Tyr-318, Glu-339, and Asp-387. The active-site Nucleophile is the Cys-414.

This sequence belongs to the class I-like SAM-binding methyltransferase superfamily. RNA M5U methyltransferase family.

This is an uncharacterized protein from Lactobacillus johnsonii (strain CNCM I-12250 / La1 / NCC 533).